The following is a 103-amino-acid chain: Small ribosomal subunit protein uS10 (103 aa).

It belongs to the universal ribosomal protein uS10 family. As to quaternary structure, part of the 30S ribosomal subunit.

In terms of biological role, involved in the binding of tRNA to the ribosomes. This chain is Small ribosomal subunit protein uS10, found in Neisseria gonorrhoeae (strain ATCC 700825 / FA 1090).